A 494-amino-acid chain; its full sequence is Autocrine proliferation repressor protein A (494 aa).

Positions 1 to 18 (MSKLLILLLLSLVASIFS) are cleaved as a signal peptide. N-linked (GlcNAc...) asparagine glycans are attached at residues asparagine 37, asparagine 153, and asparagine 302.

Belongs to the pqaA family. In terms of assembly, interacts with cfaD.

The protein localises to the secreted. In terms of biological role, inhibitor that slows proliferation of secreting cells (also known as chalone). May function by binding to cell surface receptors. Requires cfaD for activity. Overexpression slows proliferation. The sequence is that of Autocrine proliferation repressor protein A (aprA) from Dictyostelium discoideum (Social amoeba).